The primary structure comprises 335 residues: UPF0353 protein MT1528 (335 aa).

The next 2 membrane-spanning stretches (helical) occupy residues 18–38 (WFFL…LMQL) and 67–87 (VPAI…AGPT). In terms of domain architecture, VWFA spans 98-294 (VVMLVIDVSQ…AELRAVYSSL (197 aa)). The chain crosses the membrane as a helical span at residues 309–329 (VGWLRLGALALALAALAALLI).

It belongs to the UPF0353 family.

It is found in the cell membrane. This is UPF0353 protein MT1528 from Mycobacterium tuberculosis (strain CDC 1551 / Oshkosh).